The sequence spans 615 residues: Medium-chain acyl-CoA ligase ACSF2, mitochondrial (615 aa).

Residues 1–41 constitute a mitochondrion transit peptide; that stretch reads MAVYVGMLRLGRLCAGSSGVLGARAALSRSWQEARLQGVRF. Position 179 is an N6-acetyllysine (Lys179). N6-acetyllysine; alternate is present on Lys182. Lys182 carries the N6-succinyllysine; alternate modification. Residue 263 to 271 participates in ATP binding; sequence TSGTTGSPK. N6-acetyllysine occurs at positions 340 and 398. Lys478 bears the N6-succinyllysine mark. 2 residues coordinate ATP: Asp493 and Arg508. Lys510 is subject to N6-acetyllysine. N6-acetyllysine; alternate is present on residues Lys544 and Lys570. Residues Lys544 and Lys570 each carry the N6-succinyllysine; alternate modification. Residue Lys599 coordinates ATP. Lys599 carries the post-translational modification N6-succinyllysine.

Belongs to the ATP-dependent AMP-binding enzyme family.

It is found in the mitochondrion. It carries out the reaction a medium-chain fatty acid + ATP + CoA = a medium-chain fatty acyl-CoA + AMP + diphosphate. The catalysed reaction is octanoate + ATP + CoA = octanoyl-CoA + AMP + diphosphate. Functionally, acyl-CoA synthases catalyze the initial reaction in fatty acid metabolism, by forming a thioester with CoA. Has some preference toward medium-chain substrates. Plays a role in adipocyte differentiation. In Homo sapiens (Human), this protein is Medium-chain acyl-CoA ligase ACSF2, mitochondrial.